The sequence spans 194 residues: Oligoribonuclease (194 aa).

An Exonuclease domain is found at 11–174 (LIWIDLEMTG…SDVRDSIDEL (164 aa)). The active site involves Tyr-132.

The protein belongs to the oligoribonuclease family.

The protein localises to the cytoplasm. In terms of biological role, 3'-to-5' exoribonuclease specific for small oligoribonucleotides. The protein is Oligoribonuclease of Xanthomonas axonopodis pv. citri (strain 306).